The sequence spans 670 residues: DNA ligase (670 aa).

Residues 33-37, 82-83, and Glu-114 contribute to the NAD(+) site; these read DAEYD and SL. Lys-116 (N6-AMP-lysine intermediate) is an active-site residue. NAD(+) contacts are provided by Arg-137, Glu-174, Lys-291, and Lys-315. Positions 409, 412, 427, and 433 each coordinate Zn(2+). Residues 593–670 form the BRCT domain; that stretch reads GVELPLEGKT…TEQDLLNLMK (78 aa).

Belongs to the NAD-dependent DNA ligase family. LigA subfamily. Requires Mg(2+) as cofactor. It depends on Mn(2+) as a cofactor.

The catalysed reaction is NAD(+) + (deoxyribonucleotide)n-3'-hydroxyl + 5'-phospho-(deoxyribonucleotide)m = (deoxyribonucleotide)n+m + AMP + beta-nicotinamide D-nucleotide.. Functionally, DNA ligase that catalyzes the formation of phosphodiester linkages between 5'-phosphoryl and 3'-hydroxyl groups in double-stranded DNA using NAD as a coenzyme and as the energy source for the reaction. It is essential for DNA replication and repair of damaged DNA. This is DNA ligase from Vibrio campbellii (strain ATCC BAA-1116).